A 151-amino-acid polypeptide reads, in one-letter code: Large ribosomal subunit protein uL15 (151 aa).

Positions 1-51 (MPLKIEDLKPTPGSRKPKKRLGRGIGSGLGKTAGKGHKGEKARGRGKIGRT) are disordered. The segment covering 23–33 (RGIGSGLGKTA) has biased composition (gly residues).

This sequence belongs to the universal ribosomal protein uL15 family. Part of the 50S ribosomal subunit.

Functionally, binds to the 23S rRNA. This chain is Large ribosomal subunit protein uL15, found in Petrotoga mobilis (strain DSM 10674 / SJ95).